The chain runs to 72 residues: Translation initiation factor IF-1 (72 aa).

The 72-residue stretch at 1-72 (MAKEEQIELE…TKGRITFRMK (72 aa)) folds into the S1-like domain.

This sequence belongs to the IF-1 family. As to quaternary structure, component of the 30S ribosomal translation pre-initiation complex which assembles on the 30S ribosome in the order IF-2 and IF-3, IF-1 and N-formylmethionyl-tRNA(fMet); mRNA recruitment can occur at any time during PIC assembly.

It localises to the cytoplasm. In terms of biological role, one of the essential components for the initiation of protein synthesis. Stabilizes the binding of IF-2 and IF-3 on the 30S subunit to which N-formylmethionyl-tRNA(fMet) subsequently binds. Helps modulate mRNA selection, yielding the 30S pre-initiation complex (PIC). Upon addition of the 50S ribosomal subunit IF-1, IF-2 and IF-3 are released leaving the mature 70S translation initiation complex. This Alcanivorax borkumensis (strain ATCC 700651 / DSM 11573 / NCIMB 13689 / SK2) protein is Translation initiation factor IF-1.